The primary structure comprises 505 residues: Glycerol kinase 1 (505 aa).

Thr-13 contacts ADP. ATP contacts are provided by Thr-13, Thr-14, and Ser-15. Residue Thr-13 coordinates sn-glycerol 3-phosphate. An ADP-binding site is contributed by Arg-17. Arg-83, Glu-84, and Tyr-135 together coordinate sn-glycerol 3-phosphate. Glycerol is bound by residues Arg-83, Glu-84, and Tyr-135. Position 231 is a phosphohistidine; by HPr (His-231). Asp-245 contacts sn-glycerol 3-phosphate. The glycerol site is built by Asp-245 and Gln-246. ADP-binding residues include Thr-267 and Gly-310. Positions 267, 310, 314, and 411 each coordinate ATP. 2 residues coordinate ADP: Gly-411 and Asn-415.

It belongs to the FGGY kinase family. As to quaternary structure, homotetramer and homodimer (in equilibrium). The phosphoenolpyruvate-dependent sugar phosphotransferase system (PTS), including enzyme I, and histidine-containing protein (HPr) are required for the phosphorylation, which leads to the activation of the enzyme.

It catalyses the reaction glycerol + ATP = sn-glycerol 3-phosphate + ADP + H(+). Its pathway is polyol metabolism; glycerol degradation via glycerol kinase pathway; sn-glycerol 3-phosphate from glycerol: step 1/1. Activated by phosphorylation and inhibited by fructose 1,6-bisphosphate (FBP). Its function is as follows. Key enzyme in the regulation of glycerol uptake and metabolism. Catalyzes the phosphorylation of glycerol to yield sn-glycerol 3-phosphate. This is Glycerol kinase 1 from Lactiplantibacillus plantarum (strain ATCC BAA-793 / NCIMB 8826 / WCFS1) (Lactobacillus plantarum).